A 696-amino-acid polypeptide reads, in one-letter code: DNA-directed RNA polymerase subunit beta' (696 aa).

Positions 70, 72, 85, and 88 each coordinate Zn(2+). 3 residues coordinate Mg(2+): D540, D542, and D544.

Belongs to the RNA polymerase beta' chain family. RpoC1 subfamily. In plastids the minimal PEP RNA polymerase catalytic core is composed of four subunits: alpha, beta, beta', and beta''. When a (nuclear-encoded) sigma factor is associated with the core the holoenzyme is formed, which can initiate transcription. Mg(2+) serves as cofactor. The cofactor is Zn(2+).

Its subcellular location is the plastid. It is found in the chloroplast. It catalyses the reaction RNA(n) + a ribonucleoside 5'-triphosphate = RNA(n+1) + diphosphate. Functionally, DNA-dependent RNA polymerase catalyzes the transcription of DNA into RNA using the four ribonucleoside triphosphates as substrates. The protein is DNA-directed RNA polymerase subunit beta' of Phaeodactylum tricornutum (strain CCAP 1055/1).